The sequence spans 521 residues: Bifunctional purine biosynthesis protein PurH (521 aa).

Residues 1 to 149 (MSDPVIKRAL…KNNESVTVVT (149 aa)) enclose the MGS-like domain.

The protein belongs to the PurH family.

It carries out the reaction (6R)-10-formyltetrahydrofolate + 5-amino-1-(5-phospho-beta-D-ribosyl)imidazole-4-carboxamide = 5-formamido-1-(5-phospho-D-ribosyl)imidazole-4-carboxamide + (6S)-5,6,7,8-tetrahydrofolate. The catalysed reaction is IMP + H2O = 5-formamido-1-(5-phospho-D-ribosyl)imidazole-4-carboxamide. It functions in the pathway purine metabolism; IMP biosynthesis via de novo pathway; 5-formamido-1-(5-phospho-D-ribosyl)imidazole-4-carboxamide from 5-amino-1-(5-phospho-D-ribosyl)imidazole-4-carboxamide (10-formyl THF route): step 1/1. Its pathway is purine metabolism; IMP biosynthesis via de novo pathway; IMP from 5-formamido-1-(5-phospho-D-ribosyl)imidazole-4-carboxamide: step 1/1. The sequence is that of Bifunctional purine biosynthesis protein PurH from Chlorobium phaeobacteroides (strain DSM 266 / SMG 266 / 2430).